The chain runs to 277 residues: Ras suppressor protein 1 (277 aa).

The tract at residues 1-23 (MSKSLKKLVEESREKNQPEVDMS) is disordered. N-acetylserine is present on Ser2. Basic and acidic residues predominate over residues 7–23 (KLVEESREKNQPEVDMS). LRR repeat units follow at residues 41–63 (HITQ…AELK), 64–85 (NLEV…ISSL), 87–109 (KLKH…GSLP), 110–133 (ALEV…FFYL), 135–156 (TLRA…IGKL), 158–179 (KLQI…IGEL), and 181–202 (QLKE…LGNL). Positions 250–277 (MQANPEPPKKNNDKSKKISRKPLAAKNK) are disordered. A compositionally biased stretch (basic and acidic residues) spans 256–265 (PPKKNNDKSK).

Its function is as follows. Potentially plays a role in the Ras signal transduction pathway. Capable of suppressing v-Ras transformation in vitro. This is Ras suppressor protein 1 (RSU1) from Bos taurus (Bovine).